The following is a 466-amino-acid chain: Probable sensor protein PcoS (466 aa).

Over 1–10 the chain is Cytoplasmic; that stretch reads MRFKISLTTR. A helical transmembrane segment spans residues 11-31; the sequence is LSLIFSAVMLTVWWLSSFILI. The Periplasmic portion of the chain corresponds to 32-171; the sequence is STLNDYFDNQ…HTLLMDKLST (140 aa). The chain crosses the membrane as a helical span at residues 172-192; that stretch reads WLFWFNIGLVFISVFLGWLTT. The region spanning 193–246 is the HAMP domain; the sequence is RIGLKPLREMTSLASSMTVHSLDQRLNPDLAPPEISETMQEFNNMFDRLEGAFR. At 193–466 the chain is on the cytoplasmic side; that stretch reads RIGLKPLREM…IVFKVRLLMD (274 aa). The region spanning 254-466 is the Histidine kinase domain; the sequence is DIAHELRTPV…IVFKVRLLMD (213 aa). H257 bears the Phosphohistidine; by autocatalysis mark.

Its subcellular location is the cell inner membrane. It carries out the reaction ATP + protein L-histidine = ADP + protein N-phospho-L-histidine.. Its function is as follows. Probable member of a two-component regulatory system PcoS/PcoR. May activate PcoR by phosphorylation. This is Probable sensor protein PcoS (pcoS) from Escherichia coli.